The primary structure comprises 416 residues: Enterobactin exporter EntS (416 aa).

Over 1-21 (MNKQSWLLNLSLLKTHPAFRA) the chain is Cytoplasmic. The helical transmembrane segment at 22–42 (VFLARFISIVSLGLLGVAVPV) threads the bilayer. Over 43–55 (QIQMMTHSTWQVG) the chain is Periplasmic. A helical transmembrane segment spans residues 56-76 (LSVTLTGGAMFVGLMVGGVLA). Residues 77–83 (DRYERKK) lie on the Cytoplasmic side of the membrane. The helical transmembrane segment at 84-104 (VILLARGTCGIGFIGLCLNAL) threads the bilayer. The Periplasmic segment spans residues 105–109 (LPEPS). A helical transmembrane segment spans residues 110–130 (LLAIYLLGLWDGFFASLGVTA). The Cytoplasmic segment spans residues 131–156 (LLAATPALVGRENLMQAGAITMLTVR). A helical transmembrane segment spans residues 157–177 (LGSVISPMIGGLLLATGGVAW). Position 178 (asparagine 178) is a topological domain, periplasmic. The chain crosses the membrane as a helical span at residues 179-199 (YGLAAAGTFITLLPLLSLPAL). Residues 200–218 (PPPPQPREHPLKSLLAGFR) are Cytoplasmic-facing. The chain crosses the membrane as a helical span at residues 219–239 (FLLASPLVGGIALLGGLLTMA). The Periplasmic segment spans residues 240 to 256 (SAVRVLYPALADNWQMS). Residues 257–277 (AAQIGFLYAAIPLGAAIGALT) traverse the membrane as a helical segment. Residues 278–287 (SGKLAHSARP) are Cytoplasmic-facing. Residues 288 to 307 (GLLMLLSTLGSFLAIGLFGL) form a helical membrane-spanning segment. Topologically, residues 308–313 (MPMWIL) are periplasmic. Residues 314 to 336 (GVVCLALFGWLSAVSSLLQYTML) form a helical membrane-spanning segment. At 337–356 (QTQTPEAMLGRINGLWTAQN) the chain is on the cytoplasmic side. Residues 357 to 377 (VTGDAIGAALLGGLGAMMTPV) form a helical membrane-spanning segment. Alanine 378 is a topological domain (periplasmic). The helical transmembrane segment at 379–399 (SASASGFGLLIIGVLLLLVLV) threads the bilayer. At 400 to 416 (ELRRFRQTPPQVTASDS) the chain is on the cytoplasmic side.

The protein belongs to the major facilitator superfamily. EntS (TC 2.A.1.38) family.

It is found in the cell inner membrane. In terms of biological role, component of an export pathway for enterobactin. This is Enterobactin exporter EntS from Escherichia coli (strain 55989 / EAEC).